Here is a 183-residue protein sequence, read N- to C-terminus: Copper transporter 4 (183 aa).

Positions 1-21 are disordered; it reads MAMPMPMPPPGPGGDAPPAPT. 2 helical membrane-spanning segments follow: residues 56 to 76 and 115 to 135; these read VGMY…AEAL and LAYL…LAAV.

The protein belongs to the copper transporter (Ctr) (TC 1.A.56) family. SLC31A subfamily.

It is found in the membrane. Involved in the transport of copper. The chain is Copper transporter 4 (COPT4) from Oryza sativa subsp. japonica (Rice).